The primary structure comprises 1072 residues: DNA-directed RNA polymerase subunit beta (1072 aa).

Belongs to the RNA polymerase beta chain family. In plastids the minimal PEP RNA polymerase catalytic core is composed of four subunits: alpha, beta, beta', and beta''. When a (nuclear-encoded) sigma factor is associated with the core the holoenzyme is formed, which can initiate transcription.

It is found in the plastid. The protein localises to the chloroplast. It carries out the reaction RNA(n) + a ribonucleoside 5'-triphosphate = RNA(n+1) + diphosphate. DNA-dependent RNA polymerase catalyzes the transcription of DNA into RNA using the four ribonucleoside triphosphates as substrates. The chain is DNA-directed RNA polymerase subunit beta from Barbarea verna (Land cress).